The sequence spans 465 residues: GTPase Der (465 aa).

EngA-type G domains are found at residues 3–166 (FLVA…LNEY) and 184–358 (IHFS…ACAN). GTP contacts are provided by residues 9–16 (GRANVGKS), 56–60 (DTGGI), 118–121 (NKVD), 190–197 (GRPNVGKS), 237–241 (DTAGV), and 302–305 (NKWD). The KH-like domain maps to 359 to 443 (KKITTADATC…PIVFEFKQSE (85 aa)). The disordered stretch occupies residues 446–465 (FADRKNKRSKDEGSKSKKVK).

The protein belongs to the TRAFAC class TrmE-Era-EngA-EngB-Septin-like GTPase superfamily. EngA (Der) GTPase family. Associates with the 50S ribosomal subunit.

GTPase that plays an essential role in the late steps of ribosome biogenesis. The chain is GTPase Der from Francisella tularensis subsp. mediasiatica (strain FSC147).